We begin with the raw amino-acid sequence, 204 residues long: Large ribosomal subunit protein eL15 (204 aa).

This sequence belongs to the eukaryotic ribosomal protein eL15 family. In terms of assembly, component of the large ribosomal subunit.

The protein resides in the cytoplasm. Functionally, component of the large ribosomal subunit. The ribosome is a large ribonucleoprotein complex responsible for the synthesis of proteins in the cell. This is Large ribosomal subunit protein eL15 (rpl15) from Anguilla japonica (Japanese eel).